The following is a 359-amino-acid chain: Peptide chain release factor 1 (359 aa).

N5-methylglutamine is present on Q236.

Belongs to the prokaryotic/mitochondrial release factor family. Methylated by PrmC. Methylation increases the termination efficiency of RF1.

It is found in the cytoplasm. Peptide chain release factor 1 directs the termination of translation in response to the peptide chain termination codons UAG and UAA. This is Peptide chain release factor 1 from Ureaplasma parvum serovar 3 (strain ATCC 27815 / 27 / NCTC 11736).